The primary structure comprises 165 residues: Glycine cleavage system H protein, mitochondrial (165 aa).

The transit peptide at 1 to 31 directs the protein to the mitochondrion; the sequence is MALRIWASSTAKALRLSSASRPHFSPLFRCF. The Lipoyl-binding domain occupies 55–137; sequence VATIGITDHA…YEDGWMIKVK (83 aa). Lys-96 carries the N6-lipoyllysine modification.

The protein belongs to the GcvH family. As to quaternary structure, the glycine cleavage system is composed of four components that only loosely associate: the P protein (EC 1.4.4.2), the T protein (EC 2.1.2.10), the L protein (EC 1.8.1.4) and the lipoyl-bearing H protein. The cofactor is (R)-lipoate. As to expression, expressed in roots, stems and leaves.

It localises to the mitochondrion. The glycine cleavage system catalyzes the degradation of glycine. The H protein shuttles the methylamine group of glycine from the P protein to the T protein. The chain is Glycine cleavage system H protein, mitochondrial (GDCSH) from Flaveria trinervia (Clustered yellowtops).